Reading from the N-terminus, the 257-residue chain is UPF0246 protein Mpe_A2092 (257 aa).

It belongs to the UPF0246 family.

This Methylibium petroleiphilum (strain ATCC BAA-1232 / LMG 22953 / PM1) protein is UPF0246 protein Mpe_A2092.